A 329-amino-acid polypeptide reads, in one-letter code: MDQLQKAKINQTQKAIVEIKNSFQKHFAKNLNLSRVTAPLFVEGQSGLNDHLDHKQKAVSFYAKKLDKTLEIVQSLAKWKRLALLDYGFSLYEGLYTDMNAIRADDDIDEIHSIYVDQWDWEILINNQDCNLDFLKSIVNKIYSTIRIVQLEIDQLYNPKQIILPDSITFISSQELEDLYPHLSPSRREYEFAKIHKAIFIYQIGYPLKSGYIQSIRSPEYDNWNLNGDLIVYHKLNDQAIELSSMGIRVSKQDFIKQTNFANLKNDQENNFYHQMILNNQLPQTIGGGIGQSRLCMFLLNKKHIGEVQVSVWPNEYKDELLKKGIKLL.

This sequence belongs to the class-II aminoacyl-tRNA synthetase family. AsnA subfamily.

The protein resides in the cytoplasm. It carries out the reaction L-aspartate + NH4(+) + ATP = L-asparagine + AMP + diphosphate + H(+). It participates in amino-acid biosynthesis; L-asparagine biosynthesis; L-asparagine from L-aspartate (ammonia route): step 1/1. The sequence is that of Aspartate--ammonia ligase from Ureaplasma parvum serovar 3 (strain ATCC 27815 / 27 / NCTC 11736).